The sequence spans 58 residues: Small ribosomal subunit protein eS27 (58 aa).

Zn(2+) is bound by residues C10, C13, C29, and C32. The C4-type zinc finger occupies 10–32; sequence CPDCEHEQVIFDHPSTIVKCIIC.

This sequence belongs to the eukaryotic ribosomal protein eS27 family. Part of the 30S ribosomal subunit. It depends on Zn(2+) as a cofactor.

The chain is Small ribosomal subunit protein eS27 from Archaeoglobus fulgidus (strain ATCC 49558 / DSM 4304 / JCM 9628 / NBRC 100126 / VC-16).